We begin with the raw amino-acid sequence, 417 residues long: MDVERLQEALKDFEKRGKKEVCPVLDQFLCHVAKTGETMIQWSQFKGYFIFKLEKVMDDFRTSAPEPRGPPNPNVEYIPFDEMKERILKIVTGFNGIPFTIQRLCELLTDPRRNYTGTDKFLRGVEKNVMVVSCVYPSSEKNNSNSLNRMNGVMFPGNSPSYTERSNINGPGTPRPLNRPKVSLSAPMTTNGLPESTDSKEANLQQNEEKNHSDSSTSESEVSSVSPLKNKHPDEDAVEAEGHEVKRLRFDKEGEVRETASQTTSSEISSVMVGETEASSSSQDKDKDSRCTRQHCTEEDEEEDEEEEEESFMTSREMIPERKNQEKESDDALTVNEETSEENNQMEESDVSQAEKDLLHSEGSENEGPVSSSSSDCRETEELVGSNSSKTGEILSESSMENDDEATEVTDEPMEQD.

Composition is skewed to polar residues over residues 140–149 (EKNNSNSLNR), 158–170 (NSPS…NING), and 186–196 (APMTTNGLPES). A disordered region spans residues 140–417 (EKNNSNSLNR…EVTDEPMEQD (278 aa)). A Phosphoserine modification is found at Ser159. Residues 197 to 213 (TDSKEANLQQNEEKNHS) are compositionally biased toward basic and acidic residues. Positions 214-226 (DSSTSESEVSSVS) are enriched in low complexity. Ser226 carries the phosphoserine modification. Residues 231–258 (KHPDEDAVEAEGHEVKRLRFDKEGEVRE) are compositionally biased toward basic and acidic residues. A compositionally biased stretch (polar residues) spans 259–269 (TASQTTSSEIS). Residues 283 to 297 (QDKDKDSRCTRQHCT) show a composition bias toward basic and acidic residues. A compositionally biased stretch (acidic residues) spans 298-311 (EEDEEEDEEEEEES). Residues 318 to 327 (MIPERKNQEK) are compositionally biased toward basic and acidic residues. The segment covering 338–350 (ETSEENNQMEESD) has biased composition (acidic residues). The span at 353–363 (QAEKDLLHSEG) shows a compositional bias: basic and acidic residues. The span at 366-375 (NEGPVSSSSS) shows a compositional bias: low complexity. Residues 385-399 (GSNSSKTGEILSESS) show a composition bias toward polar residues. The segment covering 400 to 417 (MENDDEATEVTDEPMEQD) has biased composition (acidic residues).

This sequence belongs to the PPP4R2 family. As to quaternary structure, serine/threonine-protein phosphatase 4 (PP4) occurs in different assemblies of the catalytic and one or more regulatory subunits. Component of the PP4 complexes PPP4C-PPP4R2, PPP4C-PPP4R2-PPP4R3A and PPP4C-PPP4R2-PPP4R3B. The PPP4C-PPP4R2 complex appears to be a tetramer composed of 2 molecules of PPP4C and 2 molecules of PPP4R2. Interacts with DDX20/GEMIN3 and GEMIN4. Interacts with RPA2; this DNA damage-dependent interaction recruits PPP4C leading to RPA2 dephosphorylation. In terms of tissue distribution, widely expressed.

The protein localises to the cytoplasm. Its subcellular location is the cytoskeleton. It is found in the microtubule organizing center. The protein resides in the centrosome. It localises to the nucleus. Functionally, regulatory subunit of serine/threonine-protein phosphatase 4 (PP4). May regulate the activity of PPP4C at centrosomal microtubule organizing centers. Its interaction with the SMN complex leads to enhance the temporal localization of snRNPs, suggesting a role of PPP4C in maturation of spliceosomal snRNPs. The PPP4C-PPP4R2-PPP4R3A PP4 complex specifically dephosphorylates H2AX phosphorylated on 'Ser-140' (gamma-H2AX) generated during DNA replication and required for DNA double strand break repair. Mediates RPA2 dephosphorylation by recruiting PPP4C to RPA2 in a DNA damage-dependent manner. RPA2 dephosphorylation is required for the efficient RPA2-mediated recruitment of RAD51 to chromatin following double strand breaks, an essential step for DNA repair. This chain is Serine/threonine-protein phosphatase 4 regulatory subunit 2 (PPP4R2), found in Homo sapiens (Human).